The primary structure comprises 127 residues: Holotricin-2 (127 aa).

Positions 1–15 (MMKLVIALCLIGISA) are cleaved as a signal peptide. The propeptide occupies 16 to 55 (AYVVPVYYEIYPEDATFDEADIEPQLSPAELHHGSIRERR). The segment at 43–84 (PAELHHGSIRERRSLQPGAPSFPMPGSQLPTSVSGNVEKQGR) is disordered. Residues 45–56 (ELHHGSIRERRS) show a composition bias toward basic and acidic residues. Positions 70–84 (QLPTSVSGNVEKQGR) are enriched in polar residues.

This sequence belongs to the coleoptericin family. Hemolymph.

The protein resides in the secreted. In terms of biological role, antibacterial activity against Gram-negative bacteria but not against Gram-positive bacteria. This Holotrichia diomphalia (Korean black chafer) protein is Holotricin-2.